A 156-amino-acid chain; its full sequence is Single-stranded DNA-binding protein 1 (156 aa).

An SSB domain is found at 1–104; it reads MLNRTILVGR…VVADSIQFLE (104 aa). The segment at 122-146 is disordered; sequence QTRGQSQYSNNKPVKDNPFANANCP.

Homotetramer.

This chain is Single-stranded DNA-binding protein 1 (ssb1), found in Staphylococcus aureus (strain MSSA476).